A 231-amino-acid polypeptide reads, in one-letter code: Thymidylate kinase (231 aa).

Glycine 10–threonine 17 is an ATP binding site.

Belongs to the thymidylate kinase family.

It catalyses the reaction dTMP + ATP = dTDP + ADP. Phosphorylation of dTMP to form dTDP in both de novo and salvage pathways of dTTP synthesis. This Acaryochloris marina (strain MBIC 11017) protein is Thymidylate kinase.